The sequence spans 542 residues: Malate synthase, glyoxysomal (542 aa).

Residue arginine 168 is the Proton acceptor of the active site. Residue aspartate 449 is the Proton donor of the active site. The short motif at 540-542 (SKL) is the Microbody targeting signal element.

It belongs to the malate synthase family.

It localises to the glyoxysome. The enzyme catalyses glyoxylate + acetyl-CoA + H2O = (S)-malate + CoA + H(+). Its pathway is carbohydrate metabolism; glyoxylate cycle; (S)-malate from isocitrate: step 2/2. This Neurospora crassa (strain ATCC 24698 / 74-OR23-1A / CBS 708.71 / DSM 1257 / FGSC 987) protein is Malate synthase, glyoxysomal (acu-9).